Here is a 343-residue protein sequence, read N- to C-terminus: Protein RecA (343 aa).

68–75 contacts ATP; sequence GPESGGKT.

It belongs to the RecA family.

Its subcellular location is the cytoplasm. Can catalyze the hydrolysis of ATP in the presence of single-stranded DNA, the ATP-dependent uptake of single-stranded DNA by duplex DNA, and the ATP-dependent hybridization of homologous single-stranded DNAs. It interacts with LexA causing its activation and leading to its autocatalytic cleavage. This Syntrophus aciditrophicus (strain SB) protein is Protein RecA.